We begin with the raw amino-acid sequence, 331 residues long: RNA 3'-terminal phosphate cyclase (331 aa).

ATP contacts are provided by residues Q100 and 276–280 (HLADQ). The active-site Tele-AMP-histidine intermediate is the H301.

Belongs to the RNA 3'-terminal cyclase family. Type 1 subfamily.

The protein resides in the cytoplasm. The catalysed reaction is a 3'-end 3'-phospho-ribonucleotide-RNA + ATP = a 3'-end 2',3'-cyclophospho-ribonucleotide-RNA + AMP + diphosphate. In terms of biological role, catalyzes the conversion of 3'-phosphate to a 2',3'-cyclic phosphodiester at the end of RNA. The mechanism of action of the enzyme occurs in 3 steps: (A) adenylation of the enzyme by ATP; (B) transfer of adenylate to an RNA-N3'P to produce RNA-N3'PP5'A; (C) and attack of the adjacent 2'-hydroxyl on the 3'-phosphorus in the diester linkage to produce the cyclic end product. The biological role of this enzyme is unknown but it is likely to function in some aspects of cellular RNA processing. This is RNA 3'-terminal phosphate cyclase from Methanosarcina barkeri (strain Fusaro / DSM 804).